A 257-amino-acid polypeptide reads, in one-letter code: Imidazole glycerol phosphate synthase subunit HisF (257 aa).

Catalysis depends on residues Asp11 and Asp130.

This sequence belongs to the HisA/HisF family. In terms of assembly, heterodimer of HisH and HisF.

The protein resides in the cytoplasm. The catalysed reaction is 5-[(5-phospho-1-deoxy-D-ribulos-1-ylimino)methylamino]-1-(5-phospho-beta-D-ribosyl)imidazole-4-carboxamide + L-glutamine = D-erythro-1-(imidazol-4-yl)glycerol 3-phosphate + 5-amino-1-(5-phospho-beta-D-ribosyl)imidazole-4-carboxamide + L-glutamate + H(+). It functions in the pathway amino-acid biosynthesis; L-histidine biosynthesis; L-histidine from 5-phospho-alpha-D-ribose 1-diphosphate: step 5/9. Its function is as follows. IGPS catalyzes the conversion of PRFAR and glutamine to IGP, AICAR and glutamate. The HisF subunit catalyzes the cyclization activity that produces IGP and AICAR from PRFAR using the ammonia provided by the HisH subunit. The chain is Imidazole glycerol phosphate synthase subunit HisF from Francisella philomiragia subsp. philomiragia (strain ATCC 25017 / CCUG 19701 / FSC 153 / O#319-036).